The chain runs to 494 residues: ETS translocation variant 4 (494 aa).

2 disordered regions span residues 82–113 (ENSVAFHSPPVKIKKEPQSPGSDPSQSCSHKQ) and 139–201 (AGGS…SGSA). The span at 100–113 (SPGSDPSQSCSHKQ) shows a compositional bias: polar residues. The span at 176–187 (SSSQSHACHSHS) shows a compositional bias: low complexity. Positions 188 to 197 (YPMNPSSRFP) are enriched in polar residues. The ETS DNA-binding region spans 350–430 (LQLWQFLVAL…AGERYVYKFV (81 aa)).

Belongs to the ETS family. Post-translationally, phosphorylated. As to expression, in the embryo, expressed ubiquitously until the late blastula stage, in the marginal zone of gastrula stages, in the presumptive forebrain and hindbrain and in the trunk region of early somite stages. In later stages, also expressed in Rohon-Beard neurons, epiphysis, lateral line placodes, pectoral fin buds, developing lens and heart.

The protein localises to the nucleus. In terms of biological role, transcriptional activator that binds to the (5'-CCGGA[AT]-3') motif. May control the acquisition of specific cell fates at an early stage during development of the somites and nervous system. May mediate the cellular effects of the fibroblast growth factors on embryogenesis. The polypeptide is ETS translocation variant 4 (etv4) (Danio rerio (Zebrafish)).